The primary structure comprises 358 residues: Dynein axonemal assembly factor 10 (358 aa).

WD repeat units follow at residues 64–106, 116–155, 163–206, 208–250, 258–298, and 320–358; these read EKPK…TPVY, NCID…TPVA, EAKR…VRWE, NIKN…PTKG, AHKS…QRSR, and LSTQ…LNRL.

In terms of assembly, interacts with PIH1D1; the interaction associates DNAAF10 with the R2TP complex. Interacts with several dynein axonemal assembly factors.

Its subcellular location is the dynein axonemal particle. Key assembly factor specifically required for the stability of axonemal dynein heavy chains in cytoplasm. In Xenopus laevis (African clawed frog), this protein is Dynein axonemal assembly factor 10 (dnaaf10).